The sequence spans 160 residues: SsrA-binding protein (160 aa).

It belongs to the SmpB family.

The protein resides in the cytoplasm. Its function is as follows. Required for rescue of stalled ribosomes mediated by trans-translation. Binds to transfer-messenger RNA (tmRNA), required for stable association of tmRNA with ribosomes. tmRNA and SmpB together mimic tRNA shape, replacing the anticodon stem-loop with SmpB. tmRNA is encoded by the ssrA gene; the 2 termini fold to resemble tRNA(Ala) and it encodes a 'tag peptide', a short internal open reading frame. During trans-translation Ala-aminoacylated tmRNA acts like a tRNA, entering the A-site of stalled ribosomes, displacing the stalled mRNA. The ribosome then switches to translate the ORF on the tmRNA; the nascent peptide is terminated with the 'tag peptide' encoded by the tmRNA and targeted for degradation. The ribosome is freed to recommence translation, which seems to be the essential function of trans-translation. In Mycobacterium bovis (strain ATCC BAA-935 / AF2122/97), this protein is SsrA-binding protein.